Reading from the N-terminus, the 428-residue chain is Serine--tRNA ligase (428 aa).

Residue 235–237 participates in L-serine binding; sequence TAE. An ATP-binding site is contributed by 266-268; it reads RSE. Glutamate 289 is an L-serine binding site. ATP is bound at residue 353–356; it reads EISS. Serine 389 serves as a coordination point for L-serine.

The protein belongs to the class-II aminoacyl-tRNA synthetase family. Type-1 seryl-tRNA synthetase subfamily. As to quaternary structure, homodimer. The tRNA molecule binds across the dimer.

It is found in the cytoplasm. The catalysed reaction is tRNA(Ser) + L-serine + ATP = L-seryl-tRNA(Ser) + AMP + diphosphate + H(+). It carries out the reaction tRNA(Sec) + L-serine + ATP = L-seryl-tRNA(Sec) + AMP + diphosphate + H(+). Its pathway is aminoacyl-tRNA biosynthesis; selenocysteinyl-tRNA(Sec) biosynthesis; L-seryl-tRNA(Sec) from L-serine and tRNA(Sec): step 1/1. Functionally, catalyzes the attachment of serine to tRNA(Ser). Is also able to aminoacylate tRNA(Sec) with serine, to form the misacylated tRNA L-seryl-tRNA(Sec), which will be further converted into selenocysteinyl-tRNA(Sec). In Shewanella loihica (strain ATCC BAA-1088 / PV-4), this protein is Serine--tRNA ligase.